Reading from the N-terminus, the 67-residue chain is Holin (67 aa).

At 1 to 36 the chain is on the cytoplasmic side; sequence MLSLDFNNELIKAAPIVGTGVADVSARLFFGLSLNE. Residues 37-55 traverse the membrane as a helical; Signal-anchor for type II membrane protein segment; sequence WFYVAAIAYTVVQIGAKVV. Topologically, residues 56–67 are periplasmic; it reads DKMIDWKKANKE.

The protein belongs to the T7likevirus holin family. As to quaternary structure, homomultimer.

It localises to the host cell inner membrane. Its function is as follows. Accumulates harmlessly in the cytoplasmic membrane until it reaches a critical concentration that triggers the formation of micron-scale pores (holes) causing host cell membrane disruption and endolysin escape into the periplasmic space. Participates in determining the precise timing of host cell lysis. Participates with the endolysin and spanin proteins in the sequential events which lead to the programmed host cell lysis releasing the mature viral particles from the host cell. The sequence is that of Holin from Escherichia phage T7 (Bacteriophage T7).